Consider the following 420-residue polypeptide: Phosphoribosylamine--glycine ligase (420 aa).

One can recognise an ATP-grasp domain in the interval lysine 108–histidine 314. Leucine 134 to serine 195 provides a ligand contact to ATP. Glutamate 284 and asparagine 286 together coordinate Mg(2+).

Belongs to the GARS family. The cofactor is Mg(2+). Mn(2+) is required as a cofactor.

It carries out the reaction 5-phospho-beta-D-ribosylamine + glycine + ATP = N(1)-(5-phospho-beta-D-ribosyl)glycinamide + ADP + phosphate + H(+). It participates in purine metabolism; IMP biosynthesis via de novo pathway; N(1)-(5-phospho-D-ribosyl)glycinamide from 5-phospho-alpha-D-ribose 1-diphosphate: step 2/2. The polypeptide is Phosphoribosylamine--glycine ligase (Listeria monocytogenes serotype 4b (strain F2365)).